The following is a 102-amino-acid chain: Small ribosomal subunit protein uS10 (102 aa).

This sequence belongs to the universal ribosomal protein uS10 family. Part of the 30S ribosomal subunit.

Involved in the binding of tRNA to the ribosomes. The chain is Small ribosomal subunit protein uS10 from Listeria innocua serovar 6a (strain ATCC BAA-680 / CLIP 11262).